We begin with the raw amino-acid sequence, 177 residues long: Ribosome maturation factor RimM (177 aa).

A PRC barrel domain is found at 98–177 (GEEFYWRELY…RIEVDWDPGF (80 aa)).

This sequence belongs to the RimM family. Binds ribosomal protein uS19.

The protein localises to the cytoplasm. Functionally, an accessory protein needed during the final step in the assembly of 30S ribosomal subunit, possibly for assembly of the head region. Essential for efficient processing of 16S rRNA. May be needed both before and after RbfA during the maturation of 16S rRNA. It has affinity for free ribosomal 30S subunits but not for 70S ribosomes. The polypeptide is Ribosome maturation factor RimM (Photobacterium profundum (strain SS9)).